The primary structure comprises 137 residues: Large ribosomal subunit protein uL16 (137 aa).

The protein belongs to the universal ribosomal protein uL16 family. Part of the 50S ribosomal subunit.

Binds 23S rRNA and is also seen to make contacts with the A and possibly P site tRNAs. This Marinomonas sp. (strain MWYL1) protein is Large ribosomal subunit protein uL16.